A 239-amino-acid chain; its full sequence is Tungstate uptake system permease protein TupB (239 aa).

In terms of domain architecture, ABC transmembrane type-1 spans 37–233; the sequence is IKTTLLSSSI…LIAFCLNFIT (197 aa). The next 5 membrane-spanning stretches (helical) occupy residues 45–65, 76–96, 114–134, 168–188, and 212–232; these read SISI…LGFF, IVDT…YALI, LILG…SNLI, ISVV…AMIV, and FASG…LNFI.

The protein belongs to the binding-protein-dependent transport system permease family. In terms of assembly, the complex is composed of two ATP-binding proteins (TupC), two transmembrane proteins (TupB) and a solute-binding protein (TupA).

The protein resides in the cell inner membrane. In terms of biological role, part of an ABC transporter complex involved in ultra-high affinity tungstate uptake. Probably responsible for the translocation of the substrate across the membrane. This is Tungstate uptake system permease protein TupB from Campylobacter jejuni subsp. jejuni serotype O:2 (strain ATCC 700819 / NCTC 11168).